The following is a 585-amino-acid chain: Chaperonin GroEL, chloroplastic (585 aa).

ATP is bound by residues T55–P58, D113–T117, G442, N507–A509, and D523.

This sequence belongs to the chaperonin (HSP60) family. As to quaternary structure, forms a cylinder of 14 subunits composed of two heptameric rings stacked back-to-back. Interacts with the co-chaperonin GroES.

Its subcellular location is the plastid. The protein resides in the chloroplast. The catalysed reaction is ATP + H2O + a folded polypeptide = ADP + phosphate + an unfolded polypeptide.. Together with its co-chaperonin GroES, plays an essential role in assisting protein folding. The GroEL-GroES system forms a nano-cage that allows encapsulation of the non-native substrate proteins and provides a physical environment optimized to promote and accelerate protein folding. This chain is Chaperonin GroEL, chloroplastic, found in Pyrenomonas salina.